A 46-amino-acid chain; its full sequence is Bacteriocin acidocin 8912 (46 aa).

The propeptide occupies 1 to 20 (MISSHQKTLTDKELALISGG).

The protein resides in the secreted. Has a bactericidal effect on sensitive cells but not a bacteriolytic effect. This Lactobacillus acidophilus protein is Bacteriocin acidocin 8912 (acdT).